A 456-amino-acid polypeptide reads, in one-letter code: MESNNKLKRGLSTRHIRFMALGSAIGTGLFYGSADAIKMAGPSVLLAYIIGGVAAYIIMRALGEMSVHNPAASSFSRYAQENLGPLAGYITGWTYCFEILIVAIADVTAFGIYMGVWFPAVPHWIWVLSVVLIICAINLMSVKVFGELEFWFSFFKVATIIIMIVAGIGIIVWGIGNGGQPTGIHNLWSNGGFFSNGWLGMIMSLQMVMFAYGGIEIIGITAGEAKDPEKSIPRAINSVPMRILVFYVGTLFVIMSIYPWNQVGTNGSPFVLTFQHMGITFAASILNFVVLTASLSAINSDVFGVGRMLHGMAEQGSAPKVFAKTSRRGIPWVTVLVMTIALLFAVYLNYIMPENVFLVIASLATFATVWVWIMILLSQIAFRRRLPPEEVKALKFKVPGGVVTTIAGLIFLVFIIALIGYHPDTRISLYVGFAWIVLLLIGWIFKRRRDRQLAQA.

Topologically, residues 1–17 (MESNNKLKRGLSTRHIR) are cytoplasmic. 2 consecutive transmembrane segments (helical) span residues 18-38 (FMAL…DAIK) and 39-59 (MAGP…YIIM). Topologically, residues 60-95 (RALGEMSVHNPAASSFSRYAQENLGPLAGYITGWTY) are cytoplasmic. Helical transmembrane passes span 96–116 (CFEI…YMGV) and 117–137 (WFPA…ICAI). At 138–156 (NLMSVKVFGELEFWFSFFK) the chain is on the cytoplasmic side. A helical transmembrane segment spans residues 157–177 (VATIIIMIVAGIGIIVWGIGN). At 178 to 197 (GGQPTGIHNLWSNGGFFSNG) the chain is on the periplasmic side. Residues 198–218 (WLGMIMSLQMVMFAYGGIEII) traverse the membrane as a helical segment. At 219–242 (GITAGEAKDPEKSIPRAINSVPMR) the chain is on the cytoplasmic side. Residues 243-263 (ILVFYVGTLFVIMSIYPWNQV) traverse the membrane as a helical segment. The Periplasmic portion of the chain corresponds to 264–277 (GTNGSPFVLTFQHM). The helical transmembrane segment at 278–298 (GITFAASILNFVVLTASLSAI) threads the bilayer. The Cytoplasmic segment spans residues 299–331 (NSDVFGVGRMLHGMAEQGSAPKVFAKTSRRGIP). A helical transmembrane segment spans residues 332–352 (WVTVLVMTIALLFAVYLNYIM). The Periplasmic portion of the chain corresponds to 353–355 (PEN). A helical transmembrane segment spans residues 356-376 (VFLVIASLATFATVWVWIMIL). Residues 377–399 (LSQIAFRRRLPPEEVKALKFKVP) lie on the Cytoplasmic side of the membrane. Residues 400-420 (GGVVTTIAGLIFLVFIIALIG) form a helical membrane-spanning segment. At 421–424 (YHPD) the chain is on the periplasmic side. The helical transmembrane segment at 425-445 (TRISLYVGFAWIVLLLIGWIF) threads the bilayer. Residues 446-456 (KRRRDRQLAQA) are Cytoplasmic-facing.

Belongs to the amino acid-polyamine-organocation (APC) superfamily. Amino acid transporter (AAT) (TC 2.A.3.1) family.

It localises to the cell inner membrane. In terms of biological role, permease that is involved in the transport across the cytoplasmic membrane of proline. This is Proline-specific permease ProY (proY) from Salmonella typhimurium (strain LT2 / SGSC1412 / ATCC 700720).